The primary structure comprises 294 residues: 4-diphosphocytidyl-2-C-methyl-D-erythritol kinase (294 aa).

The active site involves K19. 106–116 (PVASGIGGGSA) provides a ligand contact to ATP. D148 is an active-site residue.

Belongs to the GHMP kinase family. IspE subfamily.

It catalyses the reaction 4-CDP-2-C-methyl-D-erythritol + ATP = 4-CDP-2-C-methyl-D-erythritol 2-phosphate + ADP + H(+). It participates in isoprenoid biosynthesis; isopentenyl diphosphate biosynthesis via DXP pathway; isopentenyl diphosphate from 1-deoxy-D-xylulose 5-phosphate: step 3/6. Functionally, catalyzes the phosphorylation of the position 2 hydroxy group of 4-diphosphocytidyl-2C-methyl-D-erythritol. The polypeptide is 4-diphosphocytidyl-2-C-methyl-D-erythritol kinase (Rhizobium etli (strain ATCC 51251 / DSM 11541 / JCM 21823 / NBRC 15573 / CFN 42)).